We begin with the raw amino-acid sequence, 214 residues long: Probable nicotinate-nucleotide adenylyltransferase (214 aa).

Belongs to the NadD family.

The catalysed reaction is nicotinate beta-D-ribonucleotide + ATP + H(+) = deamido-NAD(+) + diphosphate. It functions in the pathway cofactor biosynthesis; NAD(+) biosynthesis; deamido-NAD(+) from nicotinate D-ribonucleotide: step 1/1. Its function is as follows. Catalyzes the reversible adenylation of nicotinate mononucleotide (NaMN) to nicotinic acid adenine dinucleotide (NaAD). This Mycolicibacterium vanbaalenii (strain DSM 7251 / JCM 13017 / BCRC 16820 / KCTC 9966 / NRRL B-24157 / PYR-1) (Mycobacterium vanbaalenii) protein is Probable nicotinate-nucleotide adenylyltransferase.